We begin with the raw amino-acid sequence, 183 residues long: Large ribosomal subunit protein uL6 (183 aa).

It belongs to the universal ribosomal protein uL6 family. In terms of assembly, part of the 50S ribosomal subunit.

In terms of biological role, this protein binds to the 23S rRNA, and is important in its secondary structure. It is located near the subunit interface in the base of the L7/L12 stalk, and near the tRNA binding site of the peptidyltransferase center. This Mycoplasmoides gallisepticum (strain R(low / passage 15 / clone 2)) (Mycoplasma gallisepticum) protein is Large ribosomal subunit protein uL6.